A 390-amino-acid polypeptide reads, in one-letter code: Neuromedin-B receptor (390 aa).

Positions M1–G19 are enriched in polar residues. Residues M1–P22 form a disordered region. The Extracellular segment spans residues M1 to V41. N8 and N16 each carry an N-linked (GlcNAc...) asparagine glycan. A helical transmembrane segment spans residues I42 to V65. At K66 to N79 the chain is on the cytoplasmic side. A helical membrane pass occupies residues I80–V99. The Extracellular portion of the chain corresponds to D100 to K117. C116 and C198 are disulfide-bonded. The chain crosses the membrane as a helical span at residues L118–A139. Topologically, residues D140 to A156 are cytoplasmic. Residues L157–P177 traverse the membrane as a helical segment. At E178–I211 the chain is on the extracellular side. N-linked (GlcNAc...) asparagine glycosylation occurs at N192. The helical transmembrane segment at H212 to I235 threads the bilayer. Residues A236–K266 lie on the Cytoplasmic side of the membrane. The chain crosses the membrane as a helical span at residues I267–M287. Residues Y288–S299 lie on the Extracellular side of the membrane. A helical transmembrane segment spans residues L300 to L327. Residues S328–L390 are Cytoplasmic-facing. The S-palmitoyl cysteine moiety is linked to residue C341. S352 carries the phosphoserine modification.

It belongs to the G-protein coupled receptor 1 family. In terms of tissue distribution, expressed in epididymis (at protein level).

Its subcellular location is the cell membrane. Functionally, receptor for neuromedin-B. Contributes to the maintenance of basal sigh rate through signaling in the pre-Botzinger complex, a cluster of several thousand neurons in the ventrolateral medulla responsible for inspiration during respiratory activity. Contributes to the induction of sneezing following exposure to chemical irritants or allergens which causes release of NMB by nasal sensory neurons and activation of NMBR-expressing neurons in the sneeze-evoking region of the brainstem. These in turn activate neurons of the caudal ventral respiratory group, giving rise to the sneezing response. Contributes to induction of acute itch, possibly through its activation on dorsal root ganglion neurons by the NMB peptide. Plays a role in the innate immune response to influenza A virus infection by enhancing interferon alpha expression and reducing expression of IL6. Plays a role in CSF1-induced proliferation of osteoclast precursors by contributing to the positive regulation of the expression of the CSF1 receptor CSF1R. The sequence is that of Neuromedin-B receptor (NMBR) from Homo sapiens (Human).